A 199-amino-acid chain; its full sequence is NAD(P)H dehydrogenase (quinone) (199 aa).

A Flavodoxin-like domain is found at 4–190 (VLVLYYSAYG…AGARYQGKTI (187 aa)). Residues 10 to 15 (SAYGHI) and 78 to 80 (TRF) each bind FMN. Tyr-12 is a binding site for NAD(+). Trp-98 lines the substrate pocket. FMN contacts are provided by residues 113–119 (STATQHG) and His-134.

The protein belongs to the WrbA family. The cofactor is FMN.

It carries out the reaction a quinone + NADH + H(+) = a quinol + NAD(+). The enzyme catalyses a quinone + NADPH + H(+) = a quinol + NADP(+). This chain is NAD(P)H dehydrogenase (quinone), found in Rhodopseudomonas palustris (strain TIE-1).